A 151-amino-acid chain; its full sequence is Transcriptional regulator MraZ (151 aa).

2 SpoVT-AbrB domains span residues 5 to 52 (ANAI…PLSE) and 81 to 124 (AVDL…DEDA).

The protein belongs to the MraZ family. In terms of assembly, forms oligomers.

The protein localises to the cytoplasm. It is found in the nucleoid. The chain is Transcriptional regulator MraZ from Pseudomonas syringae pv. syringae (strain B728a).